The chain runs to 191 residues: MTQQITLIKDKILSDNYFTLHNITYDLTRKDGEVIRHKREVYDRGNGATILLYNAKKKTVVLIRQFRVATWVNGNESGQLIETCAGLLDNDEPEVCIRKEAIEETGYEVGEVRKLFELYMSPGGVTELIHFFIAEYSDNQRANAGGGVEDEDIEVLELPFSQALEMIKTGEIRDGKTVLLLNYLQTSHLMD.

GDP-alpha-D-mannose contacts are provided by residues Tyr17, 38–40 (KRE), Arg67, and 85–87 (AGL). The Nudix hydrolase domain maps to 43 to 180 (DRGNGATILL…EIRDGKTVLL (138 aa)). Mg(2+) contacts are provided by Ala85, Glu100, and Glu104. Positions 86–106 (GLLDNDEPEVCIRKEAIEETG) match the Nudix box motif. GDP-alpha-D-mannose is bound by residues Glu104, Glu127, 150-151 (DE), and Lys176. Residue Glu151 coordinates Mg(2+).

This sequence belongs to the Nudix hydrolase family. NudK subfamily. Homodimer. Mg(2+) is required as a cofactor.

The catalysed reaction is GDP-alpha-D-mannose + H2O = alpha-D-mannose 1-phosphate + GMP + 2 H(+). Its function is as follows. Nucleoside diphosphate sugar hydrolase that hydrolyzes GDP-mannose as its preferred substrate, yielding GMP and mannose-1-phosphate. The protein is GDP-mannose pyrophosphatase (nudK) of Shigella boydii serotype 4 (strain Sb227).